The sequence spans 385 residues: Aspartate/prephenate aminotransferase (385 aa).

L-aspartate contacts are provided by Gly39, Trp125, and Asn175. Lys234 is subject to N6-(pyridoxal phosphate)lysine. Arg361 contributes to the L-aspartate binding site.

The protein belongs to the class-I pyridoxal-phosphate-dependent aminotransferase family. As to quaternary structure, homodimer. It depends on pyridoxal 5'-phosphate as a cofactor.

It is found in the cytoplasm. The enzyme catalyses L-aspartate + 2-oxoglutarate = oxaloacetate + L-glutamate. It catalyses the reaction L-arogenate + oxaloacetate = prephenate + L-aspartate. In terms of biological role, catalyzes the reversible conversion of aspartate and 2-oxoglutarate to glutamate and oxaloacetate. Can also transaminate prephenate in the presence of aspartate. This chain is Aspartate/prephenate aminotransferase (aspC), found in Thermus thermophilus (strain ATCC 27634 / DSM 579 / HB8).